The following is a 452-amino-acid chain: Disintegrin and metalloproteinase domain-containing protein 11 (452 aa).

Positions 1 to 120 (RRHHSPLLVS…GGGSCLFNKP (120 aa)) constitute a Peptidase M12B domain. The Extracellular portion of the chain corresponds to 1–417 (RRHHSPLLVS…EKYKGPSGTN (417 aa)). Disulfide bonds link Cys31/Cys115, Cys74/Cys99, and Cys76/Cys83. One can recognise a Disintegrin domain in the interval 126 to 214 (PPSCGNGFIE…ACPANLHKQD (89 aa)). An N-linked (GlcNAc...) asparagine glycan is attached at Asn149. The cysteines at positions 186 and 206 are disulfide-linked. N-linked (GlcNAc...) asparagine glycans are attached at residues Asn288 and Asn356. 3 cysteine pairs are disulfide-bonded: Cys360-Cys375, Cys369-Cys381, and Cys383-Cys392. Residues 360–416 (CPGSWNGVICSDHGVCSNEGKCICHPEWTGKDCSVYDPLPVPKPTGVVEKYKGPSGT) enclose the EGF-like domain. Residues 418 to 438 (IIIGSIAGAVLIAAIVLGGTG) traverse the membrane as a helical segment. At 439-452 (WGFKNIRRGRSGGG) the chain is on the cytoplasmic side.

The precursor is cleaved by a furin endopeptidase. In terms of tissue distribution, detected in testis and barely expressed in heart and muscle. Not detectable in liver.

It localises to the presynaptic cell membrane. It is found in the perikaryon. The protein localises to the cell projection. Its subcellular location is the axon. Its function is as follows. Probable ligand for integrin in the brain. This is a non-catalytic metalloprotease-like protein. The polypeptide is Disintegrin and metalloproteinase domain-containing protein 11 (adam11) (Xenopus laevis (African clawed frog)).